The sequence spans 64 residues: Alpha-conotoxin-like Ai1.2 (64 aa).

Residues 1-17 (MFTVFLLVVLATTVVSS) form the signal peptide. Positions 18 to 43 (TSGRRAFRGRNAAAKASGLVGLTDRR) are excised as a propeptide. 2 disulfide bridges follow: Cys46/Cys52 and Cys47/Cys60. A ser-Xaa-Pro motif, crucial for potent interaction with nAChR region spans residues 48–50 (SDP). Position 61 is a glycine amide (Gly61).

Belongs to the conotoxin A superfamily. Expressed by the venom duct.

The protein resides in the secreted. Its function is as follows. Alpha-conotoxins act on postsynaptic membranes, they bind to the nicotinic acetylcholine receptors (nAChR) and thus inhibit them. This chain is Alpha-conotoxin-like Ai1.2, found in Conus ammiralis (Admiral cone).